The chain runs to 776 residues: Protein translocase subunit SecA 2 (776 aa).

ATP is bound by residues Gln-80, 98–102 (GEGKT), and Asp-486.

Belongs to the SecA family. As to quaternary structure, monomer and homodimer. Part of the essential Sec protein translocation apparatus which comprises SecA, SecYEG and auxiliary proteins SecDF. Other proteins may also be involved.

The protein resides in the cell membrane. It is found in the cytoplasm. It catalyses the reaction ATP + H2O + cellular proteinSide 1 = ADP + phosphate + cellular proteinSide 2.. In terms of biological role, part of the Sec protein translocase complex. Interacts with the SecYEG preprotein conducting channel. Has a central role in coupling the hydrolysis of ATP to the transfer of proteins into and across the cell membrane, serving as an ATP-driven molecular motor driving the stepwise translocation of polypeptide chains across the membrane. The sequence is that of Protein translocase subunit SecA 2 from Listeria innocua serovar 6a (strain ATCC BAA-680 / CLIP 11262).